Here is a 359-residue protein sequence, read N- to C-terminus: tRNA/tmRNA (uracil-C(5))-methyltransferase (359 aa).

5 residues coordinate S-adenosyl-L-methionine: glutamine 183, tyrosine 211, asparagine 216, glutamate 232, and aspartate 292. The active-site Nucleophile is cysteine 317. Glutamate 351 (proton acceptor) is an active-site residue.

Belongs to the class I-like SAM-binding methyltransferase superfamily. RNA M5U methyltransferase family. TrmA subfamily.

The enzyme catalyses uridine(54) in tRNA + S-adenosyl-L-methionine = 5-methyluridine(54) in tRNA + S-adenosyl-L-homocysteine + H(+). The catalysed reaction is uridine(341) in tmRNA + S-adenosyl-L-methionine = 5-methyluridine(341) in tmRNA + S-adenosyl-L-homocysteine + H(+). Its function is as follows. Dual-specificity methyltransferase that catalyzes the formation of 5-methyluridine at position 54 (m5U54) in all tRNAs, and that of position 341 (m5U341) in tmRNA (transfer-mRNA). This chain is tRNA/tmRNA (uracil-C(5))-methyltransferase, found in Pseudomonas fluorescens (strain SBW25).